A 239-amino-acid chain; its full sequence is Methylthioribulose-1-phosphate dehydratase (239 aa).

Cys94 serves as a coordination point for substrate. 2 residues coordinate Zn(2+): His112 and His114. Catalysis depends on Glu136, which acts as the Proton donor/acceptor. Residue His192 participates in Zn(2+) binding.

This sequence belongs to the aldolase class II family. MtnB subfamily. The cofactor is Zn(2+).

It is found in the cytoplasm. The catalysed reaction is 5-(methylsulfanyl)-D-ribulose 1-phosphate = 5-methylsulfanyl-2,3-dioxopentyl phosphate + H2O. It functions in the pathway amino-acid biosynthesis; L-methionine biosynthesis via salvage pathway; L-methionine from S-methyl-5-thio-alpha-D-ribose 1-phosphate: step 2/6. Functionally, catalyzes the dehydration of methylthioribulose-1-phosphate (MTRu-1-P) into 2,3-diketo-5-methylthiopentyl-1-phosphate (DK-MTP-1-P). Functions in the methionine salvage pathway. May play a role in apoptosis. This is Methylthioribulose-1-phosphate dehydratase from Xenopus laevis (African clawed frog).